We begin with the raw amino-acid sequence, 653 residues long: Protein SCARECROW (653 aa).

Disordered regions lie at residues 1 to 69 (MAES…RRVS) and 193 to 265 (PSSS…AVQT). The segment covering 17-31 (PLRTTSSGSSSSNNR) has biased composition (low complexity). A compositionally biased stretch (pro residues) spans 32–41 (GPPPPPPPPL). Polar residues predominate over residues 51–63 (EMSSNPDYNNSSR). The segment covering 209–230 (QISNNPSPPQQQQQHQQQQQQH) has biased composition (low complexity). The span at 246–265 (STDAPPQPETVTATVPAVQT) shows a compositional bias: polar residues. Residues 281-650 (QKQDEEGLHL…LSLLTASAWT (370 aa)) form the GRAS domain. The interval 288-351 (LHLLTLLLQC…LLNSCLGIYA (64 aa)) is leucine repeat I (LRI). The short motif at 295 to 299 (LQCAE) is the LxCxE motif element. The segment at 370–435 (FQVFNGISPL…GGPPHVRLTG (66 aa)) is VHIID. The VHIID signature appears at 401–405 (VHIID). The leucine repeat II (LRII) stretch occupies residues 445 to 477 (ATGKRLSDFADKLGLPFEFCPLAEKVGNLDTER). The PFYRE stretch occupies residues 486–573 (VAVHWLQHSL…QQLLSKEIRN (88 aa)). Residues 576–650 (AVGGPSRSGE…LSLLTASAWT (75 aa)) form an SAW region.

The protein belongs to the GRAS family. As to quaternary structure, interacts with SHR, JKD and MGP. Interacts with SIEL. Interacts with RBR1 through its the LxCxE motif. Expressed in siliques, leaves and roots. Detected in the initial daughter cell before its asymmetric division and remains expressed only in the endodermal cell layer after the division. Expressed in the endodermis or starch sheath of the seedling hypocotyl, in the leaf bundle sheath cells and the root quiescent center.

It is found in the nucleus. Functionally, transcription factor required for quiescent center cells specification and maintenance of surrounding stem cells, and for the asymmetric cell division involved in radial pattern formation in roots. Essential for cell division but not differentiation of the ground tissue. Also required for normal shoot gravitropism. Regulates the radial organization of the shoot axial organs. Binds to the promoter of MGP, NUC, RLK and SCL3. Restricts SHR movment and sequesters it into the nucleus of the endodermis. This Arabidopsis thaliana (Mouse-ear cress) protein is Protein SCARECROW.